The primary structure comprises 158 residues: MKKKYYITISLIVAIAILIIDQVTKRIIATTMNIGDSYEVIPNFLNITSHRNNGAAWGILSGKMGFFYIITIVILIVLVLFYIKEAKYNLFMQVAISLLFAGALGNFIDRLVNGEVVDFVDTNIFGYDFPIFNVADSSLTIGVLFIIIALLKDANSKE.

The next 3 helical transmembrane spans lie at 4 to 24 (KYYI…DQVT), 63 to 83 (KMGF…LFYI), and 88 to 108 (YNLF…GNFI). Residues Asp-118 and Asp-136 contribute to the active site. A helical transmembrane segment spans residues 131 to 151 (IFNVADSSLTIGVLFIIIALL).

It belongs to the peptidase A8 family.

Its subcellular location is the cell membrane. It carries out the reaction Release of signal peptides from bacterial membrane prolipoproteins. Hydrolyzes -Xaa-Yaa-Zaa-|-(S,diacylglyceryl)Cys-, in which Xaa is hydrophobic (preferably Leu), and Yaa (Ala or Ser) and Zaa (Gly or Ala) have small, neutral side chains.. It participates in protein modification; lipoprotein biosynthesis (signal peptide cleavage). In terms of biological role, this protein specifically catalyzes the removal of signal peptides from prolipoproteins. This is Lipoprotein signal peptidase from Staphylococcus haemolyticus (strain JCSC1435).